The primary structure comprises 129 residues: Small ribosomal subunit protein uS11 (129 aa).

Belongs to the universal ribosomal protein uS11 family. In terms of assembly, part of the 30S ribosomal subunit. Interacts with proteins S7 and S18. Binds to IF-3.

Its function is as follows. Located on the platform of the 30S subunit, it bridges several disparate RNA helices of the 16S rRNA. Forms part of the Shine-Dalgarno cleft in the 70S ribosome. The sequence is that of Small ribosomal subunit protein uS11 from Xanthobacter autotrophicus (strain ATCC BAA-1158 / Py2).